Here is a 571-residue protein sequence, read N- to C-terminus: Septation ring formation regulator EzrA (571 aa).

Over 1–3 (MYY) the chain is Extracellular. Residues 4–22 (MLIGFIIVVIAVIGAGYIL) form a helical membrane-spanning segment. At 23-571 (KRKHYQRINE…ASKVSVDDIE (549 aa)) the chain is on the cytoplasmic side. Coiled coils occupy residues 102-147 (ATNA…TKEK), 248-298 (LAQM…DTLE), 326-374 (DALA…ASGE), 400-437 (KFAEELRSLRKDELEARDDAERMRRAIITLDRKMERER), and 478-529 (RIAE…ENHF).

The protein belongs to the EzrA family.

The protein localises to the cell membrane. In terms of biological role, negative regulator of FtsZ ring formation; modulates the frequency and position of FtsZ ring formation. Inhibits FtsZ ring formation at polar sites. Interacts either with FtsZ or with one of its binding partners to promote depolymerization. In Listeria monocytogenes serotype 4a (strain HCC23), this protein is Septation ring formation regulator EzrA.